We begin with the raw amino-acid sequence, 390 residues long: tRNA-specific 2-thiouridylase MnmA (390 aa).

Residues 33 to 40 (AMSGGVDS) and M59 contribute to the ATP site. The active-site Nucleophile is C131. A disulfide bond links C131 and C230. Residue G155 participates in ATP binding. An interaction with tRNA region spans residues 180–182 (KDQ). Residue C230 is the Cysteine persulfide intermediate of the active site.

It belongs to the MnmA/TRMU family.

It localises to the cytoplasm. The catalysed reaction is S-sulfanyl-L-cysteinyl-[protein] + uridine(34) in tRNA + AH2 + ATP = 2-thiouridine(34) in tRNA + L-cysteinyl-[protein] + A + AMP + diphosphate + H(+). Its function is as follows. Catalyzes the 2-thiolation of uridine at the wobble position (U34) of tRNA, leading to the formation of s(2)U34. This is tRNA-specific 2-thiouridylase MnmA from Symbiobacterium thermophilum (strain DSM 24528 / JCM 14929 / IAM 14863 / T).